A 368-amino-acid chain; its full sequence is Phospho-N-acetylmuramoyl-pentapeptide-transferase (368 aa).

Transmembrane regions (helical) follow at residues 34–54, 79–99, 102–122, 140–160, 176–196, 207–227, 247–267, 271–291, 296–316, and 345–365; these read GAVV…IDHL, TPTM…VLWA, LNPY…VGFY, ARIL…VRLG, LVIK…VGAG, GLAI…AYLA, LAVL…FNAP, IFMG…IAVA, IVLA…IVQV, and QIVI…LSTL.

This sequence belongs to the glycosyltransferase 4 family. MraY subfamily. The cofactor is Mg(2+).

Its subcellular location is the cell inner membrane. It carries out the reaction UDP-N-acetyl-alpha-D-muramoyl-L-alanyl-gamma-D-glutamyl-meso-2,6-diaminopimeloyl-D-alanyl-D-alanine + di-trans,octa-cis-undecaprenyl phosphate = di-trans,octa-cis-undecaprenyl diphospho-N-acetyl-alpha-D-muramoyl-L-alanyl-D-glutamyl-meso-2,6-diaminopimeloyl-D-alanyl-D-alanine + UMP. It participates in cell wall biogenesis; peptidoglycan biosynthesis. In terms of biological role, catalyzes the initial step of the lipid cycle reactions in the biosynthesis of the cell wall peptidoglycan: transfers peptidoglycan precursor phospho-MurNAc-pentapeptide from UDP-MurNAc-pentapeptide onto the lipid carrier undecaprenyl phosphate, yielding undecaprenyl-pyrophosphoryl-MurNAc-pentapeptide, known as lipid I. This is Phospho-N-acetylmuramoyl-pentapeptide-transferase from Bradyrhizobium sp. (strain BTAi1 / ATCC BAA-1182).